The primary structure comprises 329 residues: NAD(P)H-dependent D-xylose reductase (329 aa).

The Proton donor role is filled by Y52. Position 114 (H114) interacts with substrate. NAD(+)-binding positions include 173 to 174 (SN), 222 to 231 (SSFGPVSFLE), and 278 to 288 (KSSKKERLLDN).

Belongs to the aldo/keto reductase family.

It catalyses the reaction xylitol + NAD(+) = D-xylose + NADH + H(+). The enzyme catalyses xylitol + NADP(+) = D-xylose + NADPH + H(+). It functions in the pathway carbohydrate metabolism; D-xylose degradation. In terms of biological role, reduces D-xylose into xylitol. The polypeptide is NAD(P)H-dependent D-xylose reductase (XYL1) (Kluyveromyces lactis (strain ATCC 8585 / CBS 2359 / DSM 70799 / NBRC 1267 / NRRL Y-1140 / WM37) (Yeast)).